The primary structure comprises 531 residues: Pescadillo homolog (531 aa).

A BRCT domain is found at 309–398 (SIKTMFKGCV…RKLPTERYMP (90 aa)).

It belongs to the pescadillo family.

It localises to the nucleus. The protein resides in the nucleolus. Its subcellular location is the nucleoplasm. Functionally, required for maturation of ribosomal RNAs and formation of the large ribosomal subunit. This chain is Pescadillo homolog, found in Caenorhabditis elegans.